The following is a 261-amino-acid chain: Kallikrein 1-related peptidase b11 (261 aa).

The signal sequence occupies residues 1 to 18; sequence MWFLILFLALSLGGIDAA. Positions 19-24 are cleaved as a propeptide — activation peptide; it reads PPVQSR. Residues 25–258 enclose the Peptidase S1 domain; the sequence is IVGGFNCEKN…FTNWIKDTMA (234 aa). 5 cysteine pairs are disulfide-bonded: cysteine 31–cysteine 173, cysteine 50–cysteine 66, cysteine 152–cysteine 219, cysteine 184–cysteine 198, and cysteine 209–cysteine 234. The active-site Charge relay system is the histidine 65. An N-linked (GlcNAc...) asparagine glycan is attached at asparagine 102. Aspartate 120 serves as the catalytic Charge relay system. Serine 213 serves as the catalytic Charge relay system.

It belongs to the peptidase S1 family. Kallikrein subfamily.

It carries out the reaction Preferential cleavage of Arg-|-Xaa bonds in small molecule substrates. Highly selective action to release kallidin (lysyl-bradykinin) from kininogen involves hydrolysis of Met-|-Xaa or Leu-|-Xaa.. Glandular kallikreins cleave Met-Lys and Arg-Ser bonds in kininogen to release Lys-bradykinin. In Mus musculus (Mouse), this protein is Kallikrein 1-related peptidase b11 (Klk1b11).